The primary structure comprises 306 residues: Elongation factor Ts (306 aa).

The tract at residues 80-83 (TDFV) is involved in Mg(2+) ion dislocation from EF-Tu.

It belongs to the EF-Ts family.

Its subcellular location is the cytoplasm. In terms of biological role, associates with the EF-Tu.GDP complex and induces the exchange of GDP to GTP. It remains bound to the aminoacyl-tRNA.EF-Tu.GTP complex up to the GTP hydrolysis stage on the ribosome. The polypeptide is Elongation factor Ts (Clostridium acetobutylicum (strain ATCC 824 / DSM 792 / JCM 1419 / IAM 19013 / LMG 5710 / NBRC 13948 / NRRL B-527 / VKM B-1787 / 2291 / W)).